Reading from the N-terminus, the 620-residue chain is UvrABC system protein C (620 aa).

Residues 13–92 (DKPGVYIMKN…IKKYSPRYNI (80 aa)) form the GIY-YIG domain. One can recognise a UVR domain in the interval 204-239 (TSIIKNLKLEMEKAAEELEFEKAAKIRDRILAIELI).

It belongs to the UvrC family. As to quaternary structure, interacts with UvrB in an incision complex.

It localises to the cytoplasm. The UvrABC repair system catalyzes the recognition and processing of DNA lesions. UvrC both incises the 5' and 3' sides of the lesion. The N-terminal half is responsible for the 3' incision and the C-terminal half is responsible for the 5' incision. The sequence is that of UvrABC system protein C from Clostridium perfringens (strain SM101 / Type A).